We begin with the raw amino-acid sequence, 197 residues long: 3-isopropylmalate dehydratase small subunit (197 aa).

This sequence belongs to the LeuD family. LeuD type 1 subfamily. In terms of assembly, heterodimer of LeuC and LeuD.

The enzyme catalyses (2R,3S)-3-isopropylmalate = (2S)-2-isopropylmalate. The protein operates within amino-acid biosynthesis; L-leucine biosynthesis; L-leucine from 3-methyl-2-oxobutanoate: step 2/4. Its function is as follows. Catalyzes the isomerization between 2-isopropylmalate and 3-isopropylmalate, via the formation of 2-isopropylmaleate. This chain is 3-isopropylmalate dehydratase small subunit, found in Corynebacterium glutamicum (strain ATCC 13032 / DSM 20300 / JCM 1318 / BCRC 11384 / CCUG 27702 / LMG 3730 / NBRC 12168 / NCIMB 10025 / NRRL B-2784 / 534).